The sequence spans 392 residues: Phospho-N-acetylmuramoyl-pentapeptide-transferase (392 aa).

Transmembrane regions (helical) follow at residues 24 to 44, 76 to 96, 100 to 120, 137 to 157, 167 to 187, 193 to 213, 225 to 245, 262 to 282, 289 to 309, 314 to 334, and 369 to 389; these read YLTLRAVMAALTALLIGLIAG, TMGGVLILGSIAISTLLWFDL, FVWIVLAVTLGFGAIGWVDDW, YFWQSVIGLLAALYLVFSISE, FITWVQSGFLMDLPPKAGLLV, VSYPLGVLGFVILTYLVIVGS, GLAIMPVIMVGASLGIFAYVT, SGELLIFCAAMAGAGLAFLWF, VFMGDVGALALGAALGTIAVI, IVLAIMGGIFVVEALSVMLQV, and QVVVRFWIITMLLCLVGLTTL.

The protein belongs to the glycosyltransferase 4 family. MraY subfamily. The cofactor is Mg(2+).

The protein resides in the cell inner membrane. It catalyses the reaction UDP-N-acetyl-alpha-D-muramoyl-L-alanyl-gamma-D-glutamyl-meso-2,6-diaminopimeloyl-D-alanyl-D-alanine + di-trans,octa-cis-undecaprenyl phosphate = di-trans,octa-cis-undecaprenyl diphospho-N-acetyl-alpha-D-muramoyl-L-alanyl-D-glutamyl-meso-2,6-diaminopimeloyl-D-alanyl-D-alanine + UMP. The protein operates within cell wall biogenesis; peptidoglycan biosynthesis. Functionally, catalyzes the initial step of the lipid cycle reactions in the biosynthesis of the cell wall peptidoglycan: transfers peptidoglycan precursor phospho-MurNAc-pentapeptide from UDP-MurNAc-pentapeptide onto the lipid carrier undecaprenyl phosphate, yielding undecaprenyl-pyrophosphoryl-MurNAc-pentapeptide, known as lipid I. This Acidovorax ebreus (strain TPSY) (Diaphorobacter sp. (strain TPSY)) protein is Phospho-N-acetylmuramoyl-pentapeptide-transferase.